The following is a 228-amino-acid chain: Phosphoglycolate phosphatase (228 aa).

The active-site Nucleophile is aspartate 9. Mg(2+)-binding residues include aspartate 9 and aspartate 11. Residue lysine 151 participates in substrate binding. Residues aspartate 174 and aspartate 178 each coordinate Mg(2+).

This sequence belongs to the archaeal SPP-like hydrolase family. Requires Mg(2+) as cofactor.

The catalysed reaction is 2-phosphoglycolate + H2O = glycolate + phosphate. Its function is as follows. Catalyzes the dephosphorylation of 2-phosphoglycolate. This is Phosphoglycolate phosphatase from Pyrobaculum neutrophilum (strain DSM 2338 / JCM 9278 / NBRC 100436 / V24Sta) (Thermoproteus neutrophilus).